We begin with the raw amino-acid sequence, 245 residues long: Type III pantothenate kinase (245 aa).

ATP is bound at residue 6–13; sequence DQGNTILK. Residues Tyr86 and 93 to 96 contribute to the substrate site; that span reads GTDR. Asp95 functions as the Proton acceptor in the catalytic mechanism. Asp116 contributes to the K(+) binding site. Residue Thr119 participates in ATP binding. Thr171 is a binding site for substrate.

Belongs to the type III pantothenate kinase family. In terms of assembly, homodimer. The cofactor is NH4(+). It depends on K(+) as a cofactor.

The protein localises to the cytoplasm. It carries out the reaction (R)-pantothenate + ATP = (R)-4'-phosphopantothenate + ADP + H(+). It functions in the pathway cofactor biosynthesis; coenzyme A biosynthesis; CoA from (R)-pantothenate: step 1/5. Its function is as follows. Catalyzes the phosphorylation of pantothenate (Pan), the first step in CoA biosynthesis. In Azobacteroides pseudotrichonymphae genomovar. CFP2, this protein is Type III pantothenate kinase.